The sequence spans 62 residues: Venom peptide SjAPI-2 (62 aa).

5 cysteine pairs are disulfide-bonded: Cys-4-Cys-40, Cys-14-Cys-36, Cys-18-Cys-32, Cys-22-Cys-60, and Cys-42-Cys-54. One can recognise a TIL domain in the interval 4-60; it reads CRISGEVFTWCGTTCPLTCENFRNPPKHCPQGCFVGCMCRRGLVRHRNGRCVRPPRC.

It belongs to the serine protease inhibitor-like (TIL domain-containing) family. Expressed by the venom gland.

The protein localises to the secreted. Its function is as follows. Serine protease inhibitor. This chain is Venom peptide SjAPI-2, found in Scorpiops jendeki (Scorpion).